The following is a 440-amino-acid chain: C4-dicarboxylate transport protein (440 aa).

A run of 8 helical transmembrane segments spans residues leucine 8 to alanine 28, phenylalanine 40 to isoleucine 60, leucine 74 to valine 94, glycine 147 to lysine 167, isoleucine 187 to valine 207, leucine 221 to leucine 241, valine 288 to leucine 308, and alanine 354 to valine 374. Residues glutamate 419–glycine 440 are disordered.

The protein belongs to the dicarboxylate/amino acid:cation symporter (DAACS) (TC 2.A.23) family.

It localises to the cell inner membrane. Responsible for the transport of dicarboxylates such as succinate, fumarate, and malate from the periplasm across the membrane. The chain is C4-dicarboxylate transport protein from Anaeromyxobacter dehalogenans (strain 2CP-1 / ATCC BAA-258).